Consider the following 288-residue polypeptide: Pyridoxal kinase PdxY (288 aa).

Residues serine 9 and 44–45 (TQ) contribute to the substrate site. Aspartate 111, glutamate 148, and lysine 181 together coordinate ATP. Aspartate 224 lines the substrate pocket.

This sequence belongs to the pyridoxine kinase family. PdxY subfamily. As to quaternary structure, homodimer. The cofactor is Mg(2+).

The catalysed reaction is pyridoxal + ATP = pyridoxal 5'-phosphate + ADP + H(+). It functions in the pathway cofactor metabolism; pyridoxal 5'-phosphate salvage; pyridoxal 5'-phosphate from pyridoxal: step 1/1. Functionally, pyridoxal kinase involved in the salvage pathway of pyridoxal 5'-phosphate (PLP). Catalyzes the phosphorylation of pyridoxal to PLP. This chain is Pyridoxal kinase PdxY, found in Haemophilus influenzae (strain PittEE).